We begin with the raw amino-acid sequence, 571 residues long: Glutamine--tRNA ligase (571 aa).

The 'HIGH' region motif lies at 35 to 45 (PEPNGYLHIGH). ATP contacts are provided by residues 36–38 (EPN) and 42–48 (HIGHAKS). Asp-68 and Tyr-213 together coordinate L-glutamine. ATP-binding positions include Thr-232, 262 to 263 (RL), and 270 to 272 (LSK). Positions 269 to 273 (ILSKR) match the 'KMSKS' region motif.

Belongs to the class-I aminoacyl-tRNA synthetase family. In terms of assembly, monomer.

It is found in the cytoplasm. It carries out the reaction tRNA(Gln) + L-glutamine + ATP = L-glutaminyl-tRNA(Gln) + AMP + diphosphate. The protein is Glutamine--tRNA ligase of Buchnera aphidicola subsp. Acyrthosiphon pisum (strain APS) (Acyrthosiphon pisum symbiotic bacterium).